Reading from the N-terminus, the 358-residue chain is Protein IncC (358 aa).

The disordered stretch occupies residues 1–101 (MGAIHEETAN…VGSRRQEETG (101 aa)). The segment covering 88–99 (HRQEVGSRRQEE) has biased composition (basic and acidic residues).

Belongs to the ParA family.

Functionally, this is one of the proteins encoded by the trfB operon; it is involved in plasmid maintenance and replication. In Escherichia coli, this protein is Protein IncC (incC).